A 543-amino-acid chain; its full sequence is Ribosomal protein arginine N-methyltransferase rmt3 (543 aa).

A C2H2-type zinc finger spans residues 58–81 (FCCLFCDSTFTCLKDLWSHCKEAH). Positions 217 to 543 (DSYYFESYAG…KADSQSYVLN (327 aa)) constitute an SAM-dependent MTase PRMT-type domain. S-adenosyl-L-homocysteine contacts are provided by Arg239, Gly263, Asp285, Ser287, Ile313, and Glu314. Residues Glu329 and Glu338 contribute to the active site.

Belongs to the class I-like SAM-binding methyltransferase superfamily. Protein arginine N-methyltransferase family. Interacts with ef1a-c, rps2 and rps24. Note=Associates with the 40S ribosomal particle.

It is found in the cytoplasm. It localises to the cytosol. It catalyses the reaction L-arginyl-[protein] + S-adenosyl-L-methionine = N(omega)-methyl-L-arginyl-[protein] + S-adenosyl-L-homocysteine + H(+). The enzyme catalyses L-arginyl-[protein] + 2 S-adenosyl-L-methionine = N(omega),N(omega)-dimethyl-L-arginyl-[protein] + 2 S-adenosyl-L-homocysteine + 2 H(+). Its function is as follows. Methylates (mono and asymmetric dimethylation) the guanidino nitrogens of arginyl residues in ribosomal protein rps2. This is Ribosomal protein arginine N-methyltransferase rmt3 (rmt3) from Schizosaccharomyces pombe (strain 972 / ATCC 24843) (Fission yeast).